The primary structure comprises 191 residues: Putative 3-methyladenine DNA glycosylase (191 aa).

Belongs to the DNA glycosylase MPG family.

In Cutibacterium acnes (strain DSM 16379 / KPA171202) (Propionibacterium acnes), this protein is Putative 3-methyladenine DNA glycosylase.